We begin with the raw amino-acid sequence, 483 residues long: Glycogen synthase kinase-3 alpha (483 aa).

The span at 1-15 shows a compositional bias: gly residues; sequence MSGGGPSGGGPGGSG. The disordered stretch occupies residues 1 to 96; sequence MSGGGPSGGG…PPPGVKLGRD (96 aa). Position 2 is an N-acetylserine (S2). Phosphoserine is present on S2. Residue S21 is modified to Phosphoserine; by PKB/AKT1. Over residues 25 to 82 the composition is skewed to gly residues; it reads PGGGGGGGGGGPGGSASGPGGTGGGKASVGAMGGGVGASSSGGGPSGSGGGGSGGPGA. A phosphoserine mark is found at S72, S77, and S97. The Protein kinase domain maps to 119–403; that stretch reads YTDIKVIGNG…PLEACAHSFF (285 aa). ATP is bound by residues 125–133 and K148; that span reads IGNGSFGVV. The Proton acceptor role is filled by D244. Y279 carries the phosphotyrosine modification. The segment at 443 to 483 is disordered; that stretch reads PHLRSPSGPATLTSSSQALTETQTGQDWQAPDATPTLTNSS. Residues 450–469 show a composition bias toward polar residues; the sequence is GPATLTSSSQALTETQTGQD.

Belongs to the protein kinase superfamily. CMGC Ser/Thr protein kinase family. GSK-3 subfamily. In terms of assembly, monomer. Interacts with ARRB2, AXIN1 and CTNNB1/beta-catenin. Interacts with CTNND2. Interacts with LMBR1L. Interacts with DDX3X. Interacts with TNFRSF10B. Phosphorylated by AKT1 at Ser-21: upon insulin-mediated signaling, the activated PKB/AKT1 protein kinase phosphorylates and deactivates GSK3A, resulting in the dephosphorylation and activation of GYS1. Activated by phosphorylation at Tyr-279.

The enzyme catalyses L-seryl-[tau protein] + ATP = O-phospho-L-seryl-[tau protein] + ADP + H(+). It catalyses the reaction L-threonyl-[tau protein] + ATP = O-phospho-L-threonyl-[tau protein] + ADP + H(+). The catalysed reaction is L-seryl-[protein] + ATP = O-phospho-L-seryl-[protein] + ADP + H(+). It carries out the reaction L-threonyl-[protein] + ATP = O-phospho-L-threonyl-[protein] + ADP + H(+). Activated by phosphorylation at Tyr-279. In response to insulin, inhibited by phosphorylation at Ser-21 by PKB/AKT1; phosphorylation at this site causes a conformational change, preventing access of substrates to the active site. Inhibited by lithium. Constitutively active protein kinase that acts as a negative regulator in the hormonal control of glucose homeostasis, Wnt signaling and regulation of transcription factors and microtubules, by phosphorylating and inactivating glycogen synthase (GYS1 or GYS2), CTNNB1/beta-catenin, APC and AXIN1. Requires primed phosphorylation of the majority of its substrates. Contributes to insulin regulation of glycogen synthesis by phosphorylating and inhibiting GYS1 activity and hence glycogen synthesis. Regulates glycogen metabolism in liver, but not in muscle. May also mediate the development of insulin resistance by regulating activation of transcription factors. In Wnt signaling, regulates the level and transcriptional activity of nuclear CTNNB1/beta-catenin. Facilitates amyloid precursor protein (APP) processing and the generation of APP-derived amyloid plaques found in Alzheimer disease. May be involved in the regulation of replication in pancreatic beta-cells. Is necessary for the establishment of neuronal polarity and axon outgrowth. Through phosphorylation of the anti-apoptotic protein MCL1, may control cell apoptosis in response to growth factors deprivation. Acts as a regulator of autophagy by mediating phosphorylation of KAT5/TIP60 under starvation conditions, activating KAT5/TIP60 acetyltransferase activity and promoting acetylation of key autophagy regulators, such as ULK1 and RUBCNL/Pacer. Negatively regulates extrinsic apoptotic signaling pathway via death domain receptors. Promotes the formation of an anti-apoptotic complex, made of DDX3X, BRIC2 and GSK3B, at death receptors, including TNFRSF10B. The anti-apoptotic function is most effective with weak apoptotic signals and can be overcome by stronger stimulation. The polypeptide is Glycogen synthase kinase-3 alpha (Gsk3a) (Rattus norvegicus (Rat)).